Consider the following 210-residue polypeptide: uncharacterized protein (210 aa).

Over residues 101–114 (QELPEPSSPQSQSS) the composition is skewed to low complexity. The interval 101–166 (QELPEPSSPQ…SSGVSSDLQK (66 aa)) is disordered. A compositionally biased stretch (polar residues) spans 147-164 (RSTSPVTASTSSGVSSDL).

This is an uncharacterized protein from Alcelaphine herpesvirus 1 (strain C500) (AlHV-1).